Reading from the N-terminus, the 775-residue chain is MGGAAVLDWMVQDGERLANCRHDHPLAILGPQPSDAGWTVRVWMPEAHSVTLLEGGREALMTAPNHPWVFETTLSHDPGSNYKVRVERGGITHEQHDPWAFRDEWMGDMDRHLFAQGNHHHIWQRMGAHLTQRDGISGVMFCLWAPHALSVSILGDLNSWDGRHHPMQQRLGGIWELFIPGLAEGSLYKYEIRTQDGHCYQKADPYGFQHEVRPDNSSVVARLDGFQWSDGSWMQRRDSSNPLEQPISVYEMHLGSWIHASAEEPWIQPDGSPRAPVPAADMKPGARLLTYAELAARLIPYVKERGFTHIELMPITEHPFDGSWGYQVTGWYAPTSRYGTPDEFRAFVDRCHAEGIGVIIDWVPGHFPKDAHGLAFFDGTHLYEHGDPRIGEHKEWGTLIFNYSRNEVRNFLVANLVFWFEQFHIDGIRVDAVASMLYRDYLRPDGEWLANEHGGRENTEAVQFLQQANHVLFQHFPGALSIAEESTTWPMVTQPTEIGGLGFNLKWNMGWMHDMLDYFELDPWFRQFHQNNITFSIWYTYTENFMLALSHDEVVHGKSHLLHKMPGDDWQKYANTRALLAYMWTHPGKKTIFMGMEFGQRAEWNVWGDLQWDLLNYEPHKGIQLLVDDLNTLYKAEPALWRDDFDQFGFQWIDCNDNRHSVISFMRRESSSGTWLVVVANFTPQSHSHYRVGVPLAGFYEEIFNTDAARYGGSNLGNMGGKPTDEWSIHGYENSLDLCLPPLSLLVFRHDPKRSLQAASASACDKADDETADTN.

The Nucleophile role is filled by Asp431. Glu484 (proton donor) is an active-site residue.

Belongs to the glycosyl hydrolase 13 family. GlgB subfamily. In terms of assembly, monomer.

The enzyme catalyses Transfers a segment of a (1-&gt;4)-alpha-D-glucan chain to a primary hydroxy group in a similar glucan chain.. The protein operates within glycan biosynthesis; glycogen biosynthesis. Catalyzes the formation of the alpha-1,6-glucosidic linkages in glycogen by scission of a 1,4-alpha-linked oligosaccharide from growing alpha-1,4-glucan chains and the subsequent attachment of the oligosaccharide to the alpha-1,6 position. In Parasynechococcus marenigrum (strain WH8102), this protein is 1,4-alpha-glucan branching enzyme GlgB.